The chain runs to 137 residues: Small heat shock protein IbpA (137 aa).

Residues 28–137 (SQSNGGYPPY…AKKPRRIEIN (110 aa)) enclose the sHSP domain.

Belongs to the small heat shock protein (HSP20) family. In terms of assembly, monomer. Forms homomultimers of about 100-150 subunits at optimal growth temperatures. Conformation changes to monomers at high temperatures or high ionic concentrations.

The protein resides in the cytoplasm. Its function is as follows. Associates with aggregated proteins, together with IbpB, to stabilize and protect them from irreversible denaturation and extensive proteolysis during heat shock and oxidative stress. Aggregated proteins bound to the IbpAB complex are more efficiently refolded and reactivated by the ATP-dependent chaperone systems ClpB and DnaK/DnaJ/GrpE. Its activity is ATP-independent. The sequence is that of Small heat shock protein IbpA from Shigella sonnei (strain Ss046).